Here is a 335-residue protein sequence, read N- to C-terminus: Nucleoid-associated protein PputW619_4243 (335 aa).

The protein belongs to the YejK family.

It is found in the cytoplasm. The protein localises to the nucleoid. This is Nucleoid-associated protein PputW619_4243 from Pseudomonas putida (strain W619).